Consider the following 260-residue polypeptide: Histidine-binding periplasmic protein (260 aa).

The N-terminal stretch at 1–22 (MKKLALSLSLVLAFSSATAAFA) is a signal peptide. Residues Cys-60 and Cys-67 are joined by a disulfide bond. L-histidine is bound by residues Ser-91, Ser-92, Ser-94, Arg-99, Thr-143, and Asp-183.

This sequence belongs to the bacterial solute-binding protein 3 family. In terms of assembly, the complex is composed of two ATP-binding proteins (HisP), two transmembrane proteins (HisM and HisQ) and a solute-binding protein (HisJ).

It localises to the periplasm. Part of the ABC transporter complex HisPMQJ involved in histidine transport. Binds histidine. Interacts with HisQMP and stimulates ATPase activity of HisP, which results in histidine translocation. May have some additional function(s) in translocation that is independent of the stimulation of ATP hydrolysis. The protein is Histidine-binding periplasmic protein of Salmonella typhimurium (strain LT2 / SGSC1412 / ATCC 700720).